The following is a 173-amino-acid chain: Photosystem I assembly protein Ycf3 (173 aa).

TPR repeat units follow at residues Ala35–Pro68, Ser72–Met105, and Ala113–Ala146.

This sequence belongs to the Ycf3 family.

The protein resides in the cellular thylakoid membrane. Essential for the assembly of the photosystem I (PSI) complex. May act as a chaperone-like factor to guide the assembly of the PSI subunits. The polypeptide is Photosystem I assembly protein Ycf3 (Thermosynechococcus vestitus (strain NIES-2133 / IAM M-273 / BP-1)).